Consider the following 513-residue polypeptide: MQLNPSEISELIKSRIQGLEASADVRNQGTVISVTDGIVRIHGLSDVMQGEMLEFPGNTFGLALNLERDSVGAVILGEYEHISEGDVVKTTGRILEVPVGPELVGRVVDALGNPIDGKGPVNAKLTDAIEKIAPGVIWRKSVSQPVQTGIKSIDAMVPIGRGQRELIIGDRQCGKTAVALDAIINQKGKDLICIYVAIGQKASSIMNVVRKLEETGAMEYTIVVAASASDSAAMQYLAPYAGCTMGEYFRDRGQDALIIYDDLTKQAWAYRQISLLLRRPPGREAYPGDVFYLHSRLLERAARVSEEYVEKFTNGEVKGKSGSLTALPVIETQAGDVTAFVPTNVISITDGQIFLETDLFNAGIRPAINAGVSVSRVGGAAQTKVVKKLSGGIRTDLAQYRELAAFAQFASDLDEATRKQLERGRRVTELLKQPQYQPLQVWELAVSLYAANNGYLDDLDVKQVLSFEKGLRDNLKTSHADLIKRIEDTKDLSKDDEGALRAAIESFKKSGAY.

169 to 176 lines the ATP pocket; it reads GDRQCGKT.

Belongs to the ATPase alpha/beta chains family. In terms of assembly, F-type ATPases have 2 components, CF(1) - the catalytic core - and CF(0) - the membrane proton channel. CF(1) has five subunits: alpha(3), beta(3), gamma(1), delta(1), epsilon(1). CF(0) has three main subunits: a(1), b(2) and c(9-12). The alpha and beta chains form an alternating ring which encloses part of the gamma chain. CF(1) is attached to CF(0) by a central stalk formed by the gamma and epsilon chains, while a peripheral stalk is formed by the delta and b chains.

Its subcellular location is the cell inner membrane. It catalyses the reaction ATP + H2O + 4 H(+)(in) = ADP + phosphate + 5 H(+)(out). Functionally, produces ATP from ADP in the presence of a proton gradient across the membrane. The alpha chain is a regulatory subunit. The chain is ATP synthase subunit alpha from Burkholderia vietnamiensis (strain G4 / LMG 22486) (Burkholderia cepacia (strain R1808)).